The following is a 428-amino-acid chain: Histone deacetylase 3 (428 aa).

Residues 3–316 (KTVAYFYDPD…WTYETSLLVD (314 aa)) are histone deacetylase. Residues His-17, Gly-21, and Lys-25 each coordinate 1D-myo-inositol 1,4,5,6-tetrakisphosphate. Residue His-135 is part of the active site. Residues Asp-170, His-172, and Asp-259 each contribute to the Zn(2+) site. A 1D-myo-inositol 1,4,5,6-tetrakisphosphate-binding site is contributed by Arg-265. Residues 385-428 (LSYDRTDEPDPEERGSEENYSRPEAANEFYDGDHDNDKESDVEI) are disordered. Composition is skewed to basic and acidic residues over residues 386-405 (SYDR…ENYS) and 415-428 (DGDH…DVEI).

Belongs to the histone deacetylase family. HD type 1 subfamily.

It is found in the nucleus. Its subcellular location is the chromosome. The protein localises to the cytoplasm. It localises to the cytosol. The enzyme catalyses N(6)-acetyl-L-lysyl-[histone] + H2O = L-lysyl-[histone] + acetate. It carries out the reaction N(6)-acetyl-L-lysyl-[protein] + H2O = L-lysyl-[protein] + acetate. It catalyses the reaction N(6)-(2E)-butenoyl-L-lysyl-[protein] + H2O = (2E)-2-butenoate + L-lysyl-[protein]. The catalysed reaction is N(6)-(2-hydroxyisobutanoyl)-L-lysyl-[protein] + H2O = 2-hydroxy-2-methylpropanoate + L-lysyl-[protein]. The enzyme catalyses N(6)-[(S)-lactoyl]-L-lysyl-[protein] + H2O = (S)-lactate + L-lysyl-[protein]. Its activity is regulated as follows. Inositol tetraphosphate (1D-myo-inositol 1,4,5,6-tetrakisphosphate) promotes the histone deacetylase activity by acting as an intermolecular glue between HDAC3 and N-Cor repressor complex components. Histone deacetylase that catalyzes the deacetylation of lysine residues on the N-terminal part of the core histones (H2A, H2B, H3 and H4), and some other non-histone substrates. Histone deacetylation gives a tag for epigenetic repression and plays an important role in transcriptional regulation, cell cycle progression and developmental events. Histone deacetylases act via the formation of large multiprotein complexes, such as N-Cor repressor complex, which activate the histone deacetylase activity. Participates in the BCL6 transcriptional repressor activity by deacetylating the H3 'Lys-27' (H3K27) on enhancer elements, antagonizing EP300 acetyltransferase activity and repressing proximal gene expression. Also functions as a deacetylase for non-histone targets. In addition to protein deacetylase activity, also acts as a protein-lysine deacylase by recognizing other acyl groups: catalyzes removal of (2E)-butenoyl (crotonyl), lactoyl (lactyl) and 2-hydroxyisobutanoyl (2-hydroxyisobutyryl) acyl groups from lysine residues, leading to protein decrotonylation, delactylation and de-2-hydroxyisobutyrylation, respectively. This is Histone deacetylase 3 (HDAC3) from Gallus gallus (Chicken).